The chain runs to 528 residues: GMP synthase [glutamine-hydrolyzing] (528 aa).

The Glutamine amidotransferase type-1 domain occupies 22-212 (AILVLDFGSQ…VFKICQSQTN (191 aa)). The Nucleophile role is filled by Cys-99. Residues His-186 and Glu-188 contribute to the active site. Residues 213 to 403 (WSLESNVETI…LGIKKEALYR (191 aa)) form the GMPS ATP-PPase domain. Residue 240-246 (SGGTDSL) participates in ATP binding.

In terms of assembly, homodimer.

The catalysed reaction is XMP + L-glutamine + ATP + H2O = GMP + L-glutamate + AMP + diphosphate + 2 H(+). It functions in the pathway purine metabolism; GMP biosynthesis; GMP from XMP (L-Gln route): step 1/1. Its function is as follows. Catalyzes the synthesis of GMP from XMP. This chain is GMP synthase [glutamine-hydrolyzing], found in Borrelia garinii subsp. bavariensis (strain ATCC BAA-2496 / DSM 23469 / PBi) (Borreliella bavariensis).